A 513-amino-acid chain; its full sequence is Ribonuclease Y (513 aa).

Residues 4–24 (NTAIIIAITTGFVAFIGGYFL) traverse the membrane as a helical segment. Positions 203 to 266 (TVAVIPLPNE…ETARMALEKL (64 aa)) constitute a KH domain. The region spanning 329 to 422 (VLKHSVEVAY…IQAADAISAA (94 aa)) is the HD domain.

The protein belongs to the RNase Y family.

The protein resides in the cell membrane. Its function is as follows. Endoribonuclease that initiates mRNA decay. This chain is Ribonuclease Y, found in Desulforudis audaxviator (strain MP104C).